The sequence spans 413 residues: Bestrophin homolog 13 (413 aa).

The next 4 helical transmembrane spans lie at 29 to 49 (LIYLILYYSVRVFYLKGIDLI), 72 to 92 (SYTRLIPLTFLLGFYVSNVVA), 236 to 256 (LVYTQVAALATYSFFFFTLFG), and 272 to 292 (LVVPVFTIVQFLFFVGWFKVG).

The protein belongs to the anion channel-forming bestrophin (TC 1.A.46) family. Calcium-sensitive chloride channel subfamily. Forms oligomers.

It localises to the cell membrane. In terms of biological role, forms chloride channels. In Caenorhabditis elegans, this protein is Bestrophin homolog 13 (best-13).